The following is a 216-amino-acid chain: Protein Syd (216 aa).

Belongs to the Syd family.

It is found in the cell inner membrane. Its function is as follows. Interacts with the SecY protein in vivo. May bind preferentially to an uncomplexed state of SecY, thus functioning either as a chelating agent for excess SecY in the cell or as a regulatory factor that negatively controls the translocase function. This is Protein Syd from Shewanella baltica (strain OS195).